Here is a 421-residue protein sequence, read N- to C-terminus: Meiotic fizzy-related protein 1 (421 aa).

The tract at residues 79 to 107 (DTPDRKSYSLSPISPQSQDMLRQPQKPKR) is disordered. Polar residues predominate over residues 86–98 (YSLSPISPQSQDM). WD repeat units follow at residues 123-160 (KNDFYLNLLDWGQSNVLAVGLASSIYLWSAASGKVVQL), 164-203 (GATNHVTSVLWTGKGTQLAVGTDSGVIYIWDIESTKSVRS), 206-246 (GHSE…EMMK), 247-286 (VHEQEICGLQWDRSLGQLASGGNDNNLFVWDYRSSRPLHK), 289-331 (EHTA…LQNK), 333-374 (DTGS…NIAN), and 377-416 (AHTNRVLYLSMSPDGQSIVTGAGDETLRFWKLFNKKPKEE).

The protein belongs to the WD repeat CDC20/Fizzy family. Interacts with mes1.

It is found in the nucleus. In terms of biological role, meiosis-specific activator of the anaphase promoting complex/cyclosome (APC/C). Involved in cdc13 degradation. This chain is Meiotic fizzy-related protein 1 (mfr1), found in Schizosaccharomyces pombe (strain 972 / ATCC 24843) (Fission yeast).